Consider the following 281-residue polypeptide: MEMO1 family protein APE_1771 (281 aa).

The protein belongs to the MEMO1 family.

The chain is MEMO1 family protein APE_1771 from Aeropyrum pernix (strain ATCC 700893 / DSM 11879 / JCM 9820 / NBRC 100138 / K1).